We begin with the raw amino-acid sequence, 552 residues long: CTP synthase (552 aa).

Positions 1–270 (MTKYVFVTGG…DRIICEELKL (270 aa)) are amidoligase domain. Ser-13 is a CTP binding site. UTP is bound at residue Ser-13. ATP contacts are provided by residues 14-19 (SLGKGI) and Asp-71. Positions 71 and 144 each coordinate Mg(2+). CTP contacts are provided by residues 151–153 (DIE), 191–196 (KTKPTQ), and Lys-227. Residues 191–196 (KTKPTQ) and Lys-227 contribute to the UTP site. In terms of domain architecture, Glutamine amidotransferase type-1 spans 295–547 (TIGMVGKYVD…VEAAFANKQA (253 aa)). Gly-356 contacts L-glutamine. Cys-383 (nucleophile; for glutamine hydrolysis) is an active-site residue. L-glutamine contacts are provided by residues 384–387 (LGMQ), Glu-407, and Arg-473. Residues His-520 and Glu-522 contribute to the active site.

Belongs to the CTP synthase family. Homotetramer.

The enzyme catalyses UTP + L-glutamine + ATP + H2O = CTP + L-glutamate + ADP + phosphate + 2 H(+). It catalyses the reaction L-glutamine + H2O = L-glutamate + NH4(+). It carries out the reaction UTP + NH4(+) + ATP = CTP + ADP + phosphate + 2 H(+). It participates in pyrimidine metabolism; CTP biosynthesis via de novo pathway; CTP from UDP: step 2/2. Its activity is regulated as follows. Allosterically activated by GTP, when glutamine is the substrate; GTP has no effect on the reaction when ammonia is the substrate. The allosteric effector GTP functions by stabilizing the protein conformation that binds the tetrahedral intermediate(s) formed during glutamine hydrolysis. Inhibited by the product CTP, via allosteric rather than competitive inhibition. In terms of biological role, catalyzes the ATP-dependent amination of UTP to CTP with either L-glutamine or ammonia as the source of nitrogen. Regulates intracellular CTP levels through interactions with the four ribonucleotide triphosphates. The chain is CTP synthase from Burkholderia ambifaria (strain ATCC BAA-244 / DSM 16087 / CCUG 44356 / LMG 19182 / AMMD) (Burkholderia cepacia (strain AMMD)).